Here is a 97-residue protein sequence, read N- to C-terminus: Cell division topological specificity factor (97 aa).

It belongs to the MinE family.

Prevents the cell division inhibition by proteins MinC and MinD at internal division sites while permitting inhibition at polar sites. This ensures cell division at the proper site by restricting the formation of a division septum at the midpoint of the long axis of the cell. This is Cell division topological specificity factor from Rhodospirillum centenum (strain ATCC 51521 / SW).